The chain runs to 659 residues: MPSGSSAALALAAAPAPLPQPPPPPPPPPPPLPPPSGGPELEGDGLLLRERLAALGLDDPSPAEPGAPALRAPAAAAQGQARRAAELSPEERAPPGRPGAPEAAELELEEDEEEGEEAELDGDLLEEEELEEAEEEDRSSLLLLSPPAATASQTQQIPGGSLGSVLLPAARFDAREAAAAAAAAGVLYGGDDAQGMMAAMLSHAYGPGGCGAAAAALNGEQAALLRRKSVNTTECVPVPSSEHVAEIVGRQGCKIKALRAKTNTYIKTPVRGEEPIFVVTGRKEDVAMAKREILSAAEHFSMIRASRNKNGPALGGLSCSPNLPGQTTVQVRVPYRVVGLVVGPKGATIKRIQQQTHTYIVTPSRDKEPVFEVTGMPENVDRAREEIEMHIAMRTGNYIELNEENDFHYNGTDVSFEGGTLGSAWLSSNPVPPSRARMISNYRNDSSSSLGSGSTDSYFGSNRLADFSPTSPFSTGNFWFGDTLPSVGSEDLAVDSPAFDSLPTSAQTIWTPFEPVNPLSGFGSDPSGNMKTQRRGSQPSTPRLSPTFPESIEHPLARRVRSDPPSTGNHVGLPIYIPAFSNGTNSYSSSNGGSTSSSPPESRRKHDCVICFENEVIAALVPCGHNLFCMECANKICEKRTPSCPVCQTAVTQAIQIHS.

Low complexity predominate over residues 1–15 (MPSGSSAALALAAAP). Residues 1 to 140 (MPSGSSAALA…EEAEEEDRSS (140 aa)) form a disordered region. Over residues 16–37 (APLPQPPPPPPPPPPPLPPPSG) the composition is skewed to pro residues. Positions 64–82 (EPGAPALRAPAAAAQGQAR) are enriched in low complexity. Over residues 83 to 94 (RAAELSPEERAP) the composition is skewed to basic and acidic residues. Ser88 carries the post-translational modification Phosphoserine. The segment covering 104-137 (AELELEEDEEEGEEAELDGDLLEEEELEEAEEED) has biased composition (acidic residues). KH domains are found at residues 232–293 (TTEC…KREI) and 326–387 (QTTV…REEI). The disordered stretch occupies residues 513 to 569 (FEPVNPLSGFGSDPSGNMKTQRRGSQPSTPRLSPTFPESIEHPLARRVRSDPPSTGN). Over residues 526-544 (PSGNMKTQRRGSQPSTPRL) the composition is skewed to polar residues. 2 positions are modified to phosphoserine: Ser537 and Ser545. The span at 551–562 (SIEHPLARRVRS) shows a compositional bias: basic and acidic residues. Residues 608 to 648 (CVICFENEVIAALVPCGHNLFCMECANKICEKRTPSCPVCQ) form an RING-type zinc finger.

Interacts with USP7, which antagonizes the ability to degrade mRNA. In terms of tissue distribution, highest levels found in fetal brain and testis. Also expressed in thymus, salivary gland and uterus. Highly expressed in cells of the innate immune system, in particular activated NK cells. Week expression in the intestine.

The protein resides in the cytoplasm. Its subcellular location is the nucleus. It carries out the reaction S-ubiquitinyl-[E2 ubiquitin-conjugating enzyme]-L-cysteine + [acceptor protein]-L-lysine = [E2 ubiquitin-conjugating enzyme]-L-cysteine + N(6)-ubiquitinyl-[acceptor protein]-L-lysine.. Its function is as follows. E3 ubiquitin ligase responsible for the post-transcriptional regulation of common HLA-A allotypes. Binds to the 3' UTR of HLA-A2 mRNA, and regulates its levels by promoting mRNA decay. RNA binding is sufficient to prevent translation, but ubiquitin ligase activity is required for mRNA degradation. This chain is RNA-binding E3 ubiquitin-protein ligase MEX3C (MEX3C), found in Homo sapiens (Human).